We begin with the raw amino-acid sequence, 161 residues long: MRDITPDLCDKYESQVTLLNLPLQNFGQRSAFWGEIVTVRCYHDNSKVRDVLSQNGKGKVLVVDGHGSCHKALMGDQLAILAIKNDWEGVIIYGAVRDVVAMSEMDLGIKALGTSPFKTEKRGAGQVNVTLTMQNQIVEPGDYLYADWNGILMSETALDVA.

Substrate contacts are provided by residues 75–78 (GDQL) and arginine 97. Aspartate 98 serves as a coordination point for a divalent metal cation.

This sequence belongs to the class II aldolase/RraA-like family. In terms of assembly, homotrimer. A divalent metal cation is required as a cofactor.

It carries out the reaction 4-hydroxy-4-methyl-2-oxoglutarate = 2 pyruvate. It catalyses the reaction oxaloacetate + H(+) = pyruvate + CO2. Catalyzes the aldol cleavage of 4-hydroxy-4-methyl-2-oxoglutarate (HMG) into 2 molecules of pyruvate. Also contains a secondary oxaloacetate (OAA) decarboxylase activity due to the common pyruvate enolate transition state formed following C-C bond cleavage in the retro-aldol and decarboxylation reactions. This is Putative 4-hydroxy-4-methyl-2-oxoglutarate aldolase from Vibrio cholerae serotype O1 (strain ATCC 39315 / El Tor Inaba N16961).